Consider the following 421-residue polypeptide: Shaggy-related protein kinase kappa (421 aa).

Gly residues predominate over residues 1 to 10 (MASSGLGNGV). Positions 1–60 (MASSGLGNGVGTSRSAKGLKSSSSSVDWLTRDLAETRIRDKVETDDERDSEPDIIDGAGA) are disordered. The span at 29–42 (LTRDLAETRIRDKV) shows a compositional bias: basic and acidic residues. Residues 43-54 (ETDDERDSEPDI) show a composition bias toward acidic residues. The Protein kinase domain occupies 83-367 (YISEHVVGTG…ALEACIHPLF (285 aa)). ATP is bound by residues 89–97 (VGTGSFGMV) and K112. The active-site Proton acceptor is the D208. Y243 is modified (phosphotyrosine).

It belongs to the protein kinase superfamily. CMGC Ser/Thr protein kinase family. GSK-3 subfamily. Post-translationally, autophosphorylated mainly on threonine and serine residues. In terms of tissue distribution, expressed exclusively in inflorescences.

The enzyme catalyses L-seryl-[protein] + ATP = O-phospho-L-seryl-[protein] + ADP + H(+). It carries out the reaction L-threonyl-[protein] + ATP = O-phospho-L-threonyl-[protein] + ADP + H(+). In terms of biological role, may mediate extracellular signals to regulate transcription in differentiating cells. The protein is Shaggy-related protein kinase kappa (ASK10) of Arabidopsis thaliana (Mouse-ear cress).